A 227-amino-acid polypeptide reads, in one-letter code: Cytidylate kinase (227 aa).

ATP is bound at residue 12 to 20 (GPSGSGKGT).

Belongs to the cytidylate kinase family. Type 1 subfamily.

It localises to the cytoplasm. The catalysed reaction is CMP + ATP = CDP + ADP. The enzyme catalyses dCMP + ATP = dCDP + ADP. In Nitrosococcus oceani (strain ATCC 19707 / BCRC 17464 / JCM 30415 / NCIMB 11848 / C-107), this protein is Cytidylate kinase.